The following is a 100-amino-acid chain: NADH-quinone oxidoreductase subunit K 2 (100 aa).

Transmembrane regions (helical) follow at residues Leu2–Val22, Ile29–Phe49, and Phe61–Ile81.

It belongs to the complex I subunit 4L family. As to quaternary structure, NDH-1 is composed of 14 different subunits. Subunits NuoA, H, J, K, L, M, N constitute the membrane sector of the complex.

It localises to the cell inner membrane. The catalysed reaction is a quinone + NADH + 5 H(+)(in) = a quinol + NAD(+) + 4 H(+)(out). NDH-1 shuttles electrons from NADH, via FMN and iron-sulfur (Fe-S) centers, to quinones in the respiratory chain. The immediate electron acceptor for the enzyme in this species is believed to be ubiquinone. Couples the redox reaction to proton translocation (for every two electrons transferred, four hydrogen ions are translocated across the cytoplasmic membrane), and thus conserves the redox energy in a proton gradient. The chain is NADH-quinone oxidoreductase subunit K 2 from Geobacter sp. (strain M21).